We begin with the raw amino-acid sequence, 464 residues long: Anthocyanidin 3-O-galactosyltransferase 3GT1 (464 aa).

Residues S19 and H21 each coordinate an anthocyanidin. The Proton acceptor role is filled by H21. N38 is a glycosylation site (N-linked (GlcNAc...) asparagine). Catalysis depends on D121, which acts as the Charge relay. Residue H152 participates in an anthocyanidin binding. Residues A342, Q344, H359, W362, N363, S364, and E367 each contribute to the UDP-alpha-D-glucose site. G382 lines the an anthocyanidin pocket. Residue D383 coordinates UDP-alpha-D-glucose.

This sequence belongs to the UDP-glycosyltransferase family. In terms of assembly, monomer. Mostly expressed in leaves and flowers and, to a lower extent, in roots. In flowers, mainly observed in petals, toruses and scapes, and at lower levels in pistils and stamens.

The enzyme catalyses cyanidin + UDP-alpha-D-galactose = cyanidin 3-O-beta-D-galactoside + UDP + H(+). It catalyses the reaction cyanidin + UDP-alpha-D-glucose = cyanidin 3-O-beta-D-glucoside + UDP + H(+). The catalysed reaction is delphinidin + UDP-alpha-D-glucose = delphinidin 3-O-beta-D-glucoside + UDP. It carries out the reaction malvidin + UDP-alpha-D-glucose = malvidin 3-O-beta-D-glucoside + UDP. The enzyme catalyses delphinidin + UDP-alpha-D-galactose = delphinidin 3-O-beta-D-galactoside + UDP + H(+). It catalyses the reaction pelargonidin + UDP-alpha-D-galactose = pelargonidin 3-O-beta-D-galactoside betaine + UDP. The catalysed reaction is peonidin + UDP-alpha-D-galactose = peonidin 3-O-beta-D-galactoside + UDP. It carries out the reaction malvidin + UDP-alpha-D-galactose = malvidin 3-O-beta-D-galactoside + UDP + H(+). The enzyme catalyses petunidin + UDP-alpha-D-galactose = petunidin 3-O-beta-D-galactoside + UDP. It catalyses the reaction an anthocyanidin + UDP-alpha-D-glucose + H(+) = an anthocyanidin 3-O-beta-D-glucoside + UDP. The catalysed reaction is an anthocyanidin + UDP-alpha-D-galactose = an anthocyanidin 3-O-beta-D-galactoside + UDP. The protein operates within pigment biosynthesis; anthocyanin biosynthesis. Functionally, flavonoid 3-O-glycosyltransferase involved in the biosynthesis of anthocyanins conferring flower red/pink colors, mainly anthocyanidin 3-O-glycosides. Catalyzes the addition of UDP-sugar to the 3-OH of anthocyanidin, with a preference for UDP-galactose (UDP-Gal) as sugar donor and cyanidin as substrate; able to use delphinidin, pelargonidin, peonidin, malvidin and petunidin as substrates in the presence of UDP-Gal. Can also use UDP-glucose (UDP-Glu) as sugar donor with delphinidin, cyanidin and malvidin as substrates, but not active on pelargonidin, peonidin and petunidin. This chain is Anthocyanidin 3-O-galactosyltransferase 3GT1, found in Rhododendron delavayi (Rhododendron).